We begin with the raw amino-acid sequence, 263 residues long: MTDIRLYMLQSGSLKCKVHNIKMNQGNGADYEIPVPFFLITHPKGHTIIDGGNAVEVATDPRGHWGGVCDVYWPVMREDEGCVAQVKALGIDPADVKYVVQSHLHLDHTGAIGRFPNATHIVQRREYEYAFTPDWFAGGGYIRKDFDRPGLRWQFLNADVDDYYDIYGDGTLTTVFSPGHAPGHQSFLVRLPKSGPLLLTIDAAYTLDHWNEQALPGFLASTVDTVRSVQKLRTLAERTGAQVVTGHDPDAWPSFKKAPGYYD.

The Zn(2+) site is built by histidine 103, histidine 105, aspartate 107, histidine 108, histidine 180, aspartate 202, and histidine 247.

This sequence belongs to the metallo-beta-lactamase superfamily. It depends on Zn(2+) as a cofactor.

The enzyme catalyses an N-acyl-L-homoserine lactone + H2O = an N-acyl-L-homoserine + H(+). The polypeptide is N-acyl homoserine lactonase AttM (Azorhizobium caulinodans (strain ATCC 43989 / DSM 5975 / JCM 20966 / LMG 6465 / NBRC 14845 / NCIMB 13405 / ORS 571)).